Consider the following 160-residue polypeptide: Ribosomal RNA large subunit methyltransferase H (160 aa).

Leucine 76 and glycine 108 together coordinate S-adenosyl-L-methionine.

It belongs to the RNA methyltransferase RlmH family. Homodimer.

It is found in the cytoplasm. The catalysed reaction is pseudouridine(1915) in 23S rRNA + S-adenosyl-L-methionine = N(3)-methylpseudouridine(1915) in 23S rRNA + S-adenosyl-L-homocysteine + H(+). In terms of biological role, specifically methylates the pseudouridine at position 1915 (m3Psi1915) in 23S rRNA. This Rhodopseudomonas palustris (strain ATCC BAA-98 / CGA009) protein is Ribosomal RNA large subunit methyltransferase H.